A 255-amino-acid polypeptide reads, in one-letter code: Phosphoribosylaminoimidazole-succinocarboxamide synthase A (255 aa).

The protein belongs to the SAICAR synthetase family.

The enzyme catalyses 5-amino-1-(5-phospho-D-ribosyl)imidazole-4-carboxylate + L-aspartate + ATP = (2S)-2-[5-amino-1-(5-phospho-beta-D-ribosyl)imidazole-4-carboxamido]succinate + ADP + phosphate + 2 H(+). The protein operates within purine metabolism; IMP biosynthesis via de novo pathway; 5-amino-1-(5-phospho-D-ribosyl)imidazole-4-carboxamide from 5-amino-1-(5-phospho-D-ribosyl)imidazole-4-carboxylate: step 1/2. The polypeptide is Phosphoribosylaminoimidazole-succinocarboxamide synthase A (purC1) (Bradyrhizobium diazoefficiens (strain JCM 10833 / BCRC 13528 / IAM 13628 / NBRC 14792 / USDA 110)).